Here is a 305-residue protein sequence, read N- to C-terminus: UDP-3-O-acyl-N-acetylglucosamine deacetylase (305 aa).

Positions 79, 238, and 242 each coordinate Zn(2+). The active-site Proton donor is His265.

The protein belongs to the LpxC family. Requires Zn(2+) as cofactor.

It carries out the reaction a UDP-3-O-[(3R)-3-hydroxyacyl]-N-acetyl-alpha-D-glucosamine + H2O = a UDP-3-O-[(3R)-3-hydroxyacyl]-alpha-D-glucosamine + acetate. It functions in the pathway glycolipid biosynthesis; lipid IV(A) biosynthesis; lipid IV(A) from (3R)-3-hydroxytetradecanoyl-[acyl-carrier-protein] and UDP-N-acetyl-alpha-D-glucosamine: step 2/6. Its function is as follows. Catalyzes the hydrolysis of UDP-3-O-myristoyl-N-acetylglucosamine to form UDP-3-O-myristoylglucosamine and acetate, the committed step in lipid A biosynthesis. The polypeptide is UDP-3-O-acyl-N-acetylglucosamine deacetylase (Aliivibrio fischeri (strain ATCC 700601 / ES114) (Vibrio fischeri)).